An 889-amino-acid chain; its full sequence is Envelope glycoprotein gp160 (889 aa).

An N-terminal signal peptide occupies residues 1–22; it reads MGCLGNQLLIALLLLSASGIYC. The Extracellular portion of the chain corresponds to 23 to 704; that stretch reads VQYVTVFYGI…TSWIKYIQYG (682 aa). Asn-37 carries an N-linked (GlcNAc...) asparagine; by host glycan. The cysteines at positions 44 and 57 are disulfide-linked. Residues Asn-70 and Asn-114 are each glycosylated (N-linked (GlcNAc...) asparagine; by host). Cystine bridges form between Cys-101-Cys-226, Cys-108-Cys-217, Cys-113-Cys-175, Cys-239-Cys-269, and Cys-249-Cys-261. The V1 stretch occupies residues 113-174; it reads CNKSETDRWG…TGLEQEPMVS (62 aa). Positions 120-145 are disordered; the sequence is RWGLTGTPAPTTTQTTTTQASTTPTS. Residues 126–145 show a composition bias toward low complexity; the sequence is TPAPTTTQTTTTQASTTPTS. Asn-153, Asn-163, Asn-178, Asn-191, Asn-206, Asn-218, Asn-250, Asn-253, Asn-260, Asn-284, Asn-290, Asn-301, Asn-312, Asn-322, Asn-377, Asn-422, Asn-470, Asn-486, and Asn-489 each carry an N-linked (GlcNAc...) asparagine; by host glycan. The V2 stretch occupies residues 175 to 217; that stretch reads CKFNMTGLKRDKKREYNETWYSRDLVCEQNSNETDSKCYMNHC. Residues 317–349 are V3; sequence CRRPGNKTVLPVTIMSGLVFHSQPINERPKQAW. Cys-317 and Cys-350 form a disulfide bridge. 2 disulfides stabilise this stretch: Cys-401–Cys-469 and Cys-408–Cys-442. The V4 stretch occupies residues 408–442; the sequence is CKMNWFLNWVENIQNGSRWTSQNQKERQRRNYVPC. Residues 485–492 are V5; sequence GNETNITM. Residues 536-556 form a fusion peptide region; the sequence is GVFVLGFLGFLATAGSAMSAA. The immunosuppression stretch occupies residues 599 to 615; it reads LQTRVTAIEKYLKDQAQ. N-linked (GlcNAc...) asparagine; by host glycans are attached at residues Asn-635, Asn-644, and Asn-660. Residues 648–675 adopt a coiled-coil conformation; sequence QEWEKQVNFLEANITQSLEEAQIQQEKN. Residues 681–702 are MPER; binding to GalCer; that stretch reads KLNSWDIFGNWFDLTSWIKYIQ. A helical membrane pass occupies residues 705-725; the sequence is VLIVLGVIGLRIVIYVVQMLA. Residues 726 to 889 lie on the Cytoplasmic side of the membrane; it reads RLRQGYRPVF…IRQGLELTLL (164 aa). Positions 731 to 734 match the YXXV motif; contains endocytosis signal motif; that stretch reads YRPV. The S-palmitoyl cysteine; by host moiety is linked to residue Cys-797. The Di-leucine internalization motif signature appears at 888–889; it reads LL.

As to quaternary structure, the mature envelope protein (Env) consists of a homotrimer of non-covalently associated gp120-gp41 heterodimers. The resulting complex protrudes from the virus surface as a spike. Interacts with host CD4 and CCR5. Gp120 also interacts with the C-type lectins CD209/DC-SIGN and CLEC4M/DC-SIGNR (collectively referred to as DC-SIGN(R)). In terms of assembly, the mature envelope protein (Env) consists of a homotrimer of non-covalently associated gp120-gp41 heterodimers. The resulting complex protrudes from the virus surface as a spike. Specific enzymatic cleavages in vivo yield mature proteins. Envelope glycoproteins are synthesized as an inactive precursor that is heavily N-glycosylated and processed likely by host cell furin in the Golgi to yield the mature SU and TM proteins. The cleavage site between SU and TM requires the minimal sequence [KR]-X-[KR]-R. Post-translationally, palmitoylation of the transmembrane protein and of Env polyprotein (prior to its proteolytic cleavage) is essential for their association with host cell membrane lipid rafts. Palmitoylation is therefore required for envelope trafficking to classical lipid rafts, but not for viral replication.

The protein localises to the virion membrane. Its subcellular location is the host cell membrane. It is found in the host endosome membrane. Its function is as follows. The surface protein gp120 (SU) attaches the virus to the host lymphoid cell by binding to the primary receptor CD4. This interaction induces a structural rearrangement creating a high affinity binding site for a chemokine coreceptor like CCR5. This peculiar 2 stage receptor-interaction strategy allows gp120 to maintain the highly conserved coreceptor-binding site in a cryptic conformation, protected from neutralizing antibodies. These changes are transmitted to the transmembrane protein gp41 and are thought to activate its fusogenic potential by unmasking its fusion peptide. Functionally, surface protein gp120 (SU) may target the virus to gut-associated lymphoid tissue (GALT) by binding host ITGA4/ITGB7 (alpha-4/beta-7 integrins), a complex that mediates T-cell migration to the GALT. Interaction between gp120 and ITGA4/ITGB7 would allow the virus to enter GALT early in the infection, infecting and killing most of GALT's resting CD4+ T-cells. This T-cell depletion is believed to be the major insult to the host immune system leading to AIDS. In terms of biological role, the surface protein gp120 is a ligand for CD209/DC-SIGN and CLEC4M/DC-SIGNR, which are respectively found on dendritic cells (DCs), and on endothelial cells of liver sinusoids and lymph node sinuses. These interactions allow capture of viral particles at mucosal surfaces by these cells and subsequent transmission to permissive cells. DCs are professional antigen presenting cells, critical for host immunity by inducing specific immune responses against a broad variety of pathogens. They act as sentinels in various tissues where they take up antigen, process it, and present it to T-cells following migration to lymphoid organs. SIV subverts the migration properties of dendritic cells to gain access to CD4+ T-cells in lymph nodes. Virus transmission to permissive T-cells occurs either in trans (without DCs infection, through viral capture and transmission), or in cis (following DCs productive infection, through the usual CD4-gp120 interaction), thereby inducing a robust infection. In trans infection, bound virions remain infectious over days and it is proposed that they are not degraded, but protected in non-lysosomal acidic organelles within the DCs close to the cell membrane thus contributing to the viral infectious potential during DCs' migration from the periphery to the lymphoid tissues. On arrival at lymphoid tissues, intact virions recycle back to DCs' cell surface allowing virus transmission to CD4+ T-cells. Virion capture also seems to lead to MHC-II-restricted viral antigen presentation, and probably to the activation of SIV-specific CD4+ cells. The transmembrane protein gp41 (TM) acts as a class I viral fusion protein. Under the current model, the protein has at least 3 conformational states: pre-fusion native state, pre-hairpin intermediate state, and post-fusion hairpin state. During fusion of viral and target intracellular membranes, the coiled coil regions (heptad repeats) assume a trimer-of-hairpins structure, positioning the fusion peptide in close proximity to the C-terminal region of the ectodomain. The formation of this structure appears to drive apposition and subsequent fusion of viral and target cell membranes. Complete fusion occurs in host cell endosomes. The virus undergoes clathrin-dependent internalization long before endosomal fusion, thus minimizing the surface exposure of conserved viral epitopes during fusion and reducing the efficacy of inhibitors targeting these epitopes. Membranes fusion leads to delivery of the nucleocapsid into the cytoplasm. Its function is as follows. The envelope glycoprotein gp160 precursor down-modulates cell surface CD4 antigen by interacting with it in the endoplasmic reticulum and blocking its transport to the cell surface. Functionally, the gp120-gp41 heterodimer allows rapid transcytosis of the virus through CD4 negative cells such as simple epithelial monolayers of the intestinal, rectal and endocervical epithelial barriers. Both gp120 and gp41 specifically recognize glycosphingolipids galactosyl-ceramide (GalCer) or 3' sulfo-galactosyl-ceramide (GalS) present in the lipid rafts structures of epithelial cells. Binding to these alternative receptors allows the rapid transcytosis of the virus through the epithelial cells. This transcytotic vesicle-mediated transport of virions from the apical side to the basolateral side of the epithelial cells does not involve infection of the cells themselves. This chain is Envelope glycoprotein gp160 (env), found in Simian immunodeficiency virus (isolate PBj14/BCL-3) (SIV-sm).